The sequence spans 499 residues: MLLLLLLLPLLWGTKGMEGDRQYGDGYLLQVQELVTVQEGLCVHVPCSFSYPQDGWTDSDPVHGYWFRAGDRPYQDAPVATNNPDREVQAETQGRFQLLGDIWSNDCSLSIRDARKRDKGSYFFRLERGSMKWSYKSQLNYKTKQLSVFVTALTHRPDILILGTLESGHSRNLTCSVPWACKQGTPPMISWIGASVSSPGPTTARSSVLTLTPKPQDHGTSLTCQVTLPGTGVTTTSTVRLDVSYPPWNLTMTVFQGDATASTALGNGSSLSVLEGQSLRLVCAVNSNPPARLSWTRGSLTLCPSRSSNPGLLELPRVHVRDEGEFTCRAQNAQGSQHISLSLSLQNEGTGTSRPVSQVTLAAVGGAGATALAFLSFCIIFIIVRSCRKKSARPAAGVGDTGMEDAKAIRGSASQGPLTESWKDGNPLKKPPPAVAPSSGEEGELHYATLSFHKVKPQDPQGQEATDSEYSEIKIHKRETAETQACLRNHNPSSKEVRG.

A signal peptide spans 1 to 16 (MLLLLLLLPLLWGTKG). Topologically, residues 17–363 (MEGDRQYGDG…RPVSQVTLAA (347 aa)) are extracellular. A carbohydrate is bound by residues tyrosine 23, 72–75 (RPYQ), arginine 125, and 134–138 (SYKSQ). An Ig-like V-type domain is found at 40 to 123 (GLCVHVPCSF…ARKRDKGSYF (84 aa)). Disulfide bonds link cysteine 42/cysteine 181, cysteine 47/cysteine 107, and cysteine 175/cysteine 224. 2 consecutive Ig-like C2-type domains span residues 157-240 (PDIL…STVR) and 246-344 (PPWN…LSLS). Residue asparagine 172 is glycosylated (N-linked (GlcNAc...) asparagine). N-linked (GlcNAc...) asparagine glycosylation is found at asparagine 249 and asparagine 267. Residues cysteine 283 and cysteine 328 are joined by a disulfide bond. Residues 364 to 384 (VGGAGATALAFLSFCIIFIIV) traverse the membrane as a helical segment. Residues 385–499 (RSCRKKSARP…HNPSSKEVRG (115 aa)) lie on the Cytoplasmic side of the membrane. Residues 410-443 (RGSASQGPLTESWKDGNPLKKPPPAVAPSSGEEG) form a disordered region. The ITIM motif signature appears at 445–450 (LHYATL). Disordered stretches follow at residues 451–470 (SFHK…DSEY) and 478–499 (RETA…EVRG). An SLAM-like motif motif is present at residues 468–473 (SEYSEI).

Belongs to the immunoglobulin superfamily. SIGLEC (sialic acid binding Ig-like lectin) family. Expressed specifically on blood cells namely basophil, mast cells and eosinophils.

The protein resides in the membrane. Functionally, putative adhesion molecule that mediates sialic-acid dependent binding to blood cells. Preferentially binds to alpha-2,3-linked sialic acid. Also binds to alpha-2,6-linked sialic acid. The sialic acid recognition site may be masked by cis interactions with sialic acids on the same cell surface. Recognizes simultaneously epitopes having a terminal N-acetylneuraminic acid (sialic acid) and an underlying 6-O-sulfated galactose. Preferentially binds to Gal-6-sulfated sialyl-Lewis X glycan epitopes. The polypeptide is Sialic acid-binding Ig-like lectin 8 (SIGLEC8) (Homo sapiens (Human)).